A 58-amino-acid chain; its full sequence is Transactivator protein ORF121 (58 aa).

Stimulates the expression of 39k gene most probably by increasing IE1 expression. The protein is Transactivator protein ORF121 (AC121) of Lepidoptera (butterflies and moths).